Reading from the N-terminus, the 210-residue chain is ATP-dependent Clp protease proteolytic subunit (210 aa).

Catalysis depends on Ser-106, which acts as the Nucleophile. Residue His-131 is part of the active site.

Belongs to the peptidase S14 family. In terms of assembly, fourteen ClpP subunits assemble into 2 heptameric rings which stack back to back to give a disk-like structure with a central cavity, resembling the structure of eukaryotic proteasomes.

The protein resides in the cytoplasm. It carries out the reaction Hydrolysis of proteins to small peptides in the presence of ATP and magnesium. alpha-casein is the usual test substrate. In the absence of ATP, only oligopeptides shorter than five residues are hydrolyzed (such as succinyl-Leu-Tyr-|-NHMec, and Leu-Tyr-Leu-|-Tyr-Trp, in which cleavage of the -Tyr-|-Leu- and -Tyr-|-Trp bonds also occurs).. In terms of biological role, cleaves peptides in various proteins in a process that requires ATP hydrolysis. Has a chymotrypsin-like activity. Plays a major role in the degradation of misfolded proteins. The protein is ATP-dependent Clp protease proteolytic subunit of Bartonella henselae (strain ATCC 49882 / DSM 28221 / CCUG 30454 / Houston 1) (Rochalimaea henselae).